The chain runs to 107 residues: MANEVQVQLSPLKGGHPPAVKAGGKRISKKQEIGILERHTKKTGLEKTSATANVAKIQTMDALNDTLEKLSHKFPAVAHMAHQKPRPALEKVTPLKRIYIIQQPRKC.

A disordered region spans residues 1 to 26 (MANEVQVQLSPLKGGHPPAVKAGGKR).

Detected in the corneal epithelium, and only in trace amounts in the liver, bladder, brain, heart, and stomach.

May play a role in the early stages of epithelial differentiation or in apoptosis. The polypeptide is Death-associated protein-like 1 (DAPL1) (Bos taurus (Bovine)).